The primary structure comprises 62 residues: Histone H1.2, embryonic (62 aa).

Residues 1–53 enclose the H15 domain; sequence HVVAAITALKERGGSSMKKQSVFIKKALKSGVEKGTLVQVKGKGASGSFKLGK.

It belongs to the histone H1/H5 family.

It is found in the nucleus. Its subcellular location is the chromosome. Functionally, histones H1 are necessary for the condensation of nucleosome chains into higher-order structures. In Parechinus angulosus (Angulate sea urchin), this protein is Histone H1.2, embryonic.